Here is a 451-residue protein sequence, read N- to C-terminus: Aspartate aminotransferase, mitochondrial (451 aa).

Positions 52, 155, and 216 each coordinate L-aspartate. The residue at position 286 (K286) is an N6-(pyridoxal phosphate)lysine. R423 is a binding site for L-aspartate.

The protein belongs to the class-I pyridoxal-phosphate-dependent aminotransferase family. As to quaternary structure, homodimer. The cofactor is pyridoxal 5'-phosphate.

The protein localises to the mitochondrion matrix. The catalysed reaction is L-aspartate + 2-oxoglutarate = oxaloacetate + L-glutamate. Its function is as follows. Plays a key role in amino acid metabolism. Important for metabolite exchange between mitochondria and cytosol. The sequence is that of Aspartate aminotransferase, mitochondrial (AAT1) from Saccharomyces cerevisiae (strain ATCC 204508 / S288c) (Baker's yeast).